A 1854-amino-acid polypeptide reads, in one-letter code: Protein virilizer (1854 aa).

Serine 186 carries the phosphoserine modification. 2 stretches are compositionally biased toward basic and acidic residues: residues 202–214 and 236–259; these read YHQH…QREM and THSE…DWSR. 5 disordered regions span residues 202–361, 777–821, 1570–1589, 1720–1788, and 1804–1854; these read YHQH…EIIG, NPEE…GKPV, TSTE…ASSC, VRGR…NRGS, and IGSP…SYLR. Phosphoserine is present on residues serine 258, serine 260, and serine 276. Positions 275–285 are enriched in basic and acidic residues; that stretch reads RSRSVVDEHKW. Phosphothreonine is present on threonine 288. A Phosphoserine modification is found at serine 295. A Phosphothreonine modification is found at threonine 297. 2 positions are modified to phosphoserine: serine 301 and serine 312. 2 stretches are compositionally biased toward basic and acidic residues: residues 325–343 and 777–796; these read HSSE…EDRS and NPEE…KAME. Positions 779 to 808 form a coiled coil; that stretch reads EEKEEKAEKSDAEDKAMEVENEAVEAGGEK. Composition is skewed to low complexity over residues 1738 to 1748 and 1816 to 1838; these read SRPPNTSRPPS and SYRS…PHYS.

It belongs to the vir family. In terms of assembly, component of the WMM complex, a N6-methyltransferase complex composed of a catalytic subcomplex, named MAC, and of an associated subcomplex, named MACOM. The MAC subcomplex is composed of Ime4/Mettl3 and Mettl14. The MACOM subcomplex is composed of fl(2)d, Flacc/Xio, Hakai, vir, and, in some cases of nito. Part of a complex containing fl(2)d, Sxl and vir.

It localises to the nucleus. Functionally, associated component of the WMM complex, a complex that mediates N6-methyladenosine (m6A) methylation of mRNAs, a modification that plays a role in the efficiency of mRNA splicing and is required for sex determination. Required for sex determination and dosage compensation via Sxl alternative splicing: m6A methylation acts as a key regulator of Sxl pre-mRNA and promotes female-specific alternative splicing of Sxl, which determines female physiognomy. M6A methylation is also required for neuronal functions. Required for proper inclusion of regulated exons in Ubx transcripts, leading to isoforms Ia/b and IIa/b. The protein is Protein virilizer of Drosophila melanogaster (Fruit fly).